A 532-amino-acid chain; its full sequence is Protein tweety homolog 2 (532 aa).

At 1-44 (MPAARVEYIAPWWVVWLHSVPHLGLRLQRVDSTFSPGDETYQES) the chain is on the extracellular side. A helical transmembrane segment spans residues 45 to 65 (LLFLGVLAAIGLGLNLIFLTV). The Cytoplasmic portion of the chain corresponds to 66 to 87 (YLVCTCCCRRDHTVQTKQQESC). A helical membrane pass occupies residues 88–108 (CVTWTAVVAGLLCCAAVGVGF). At 109-213 (YGNSETNDGM…QTAYVEYYRW (105 aa)) the chain is on the extracellular side. Positions 113 and 116 each coordinate Ca(2+). Asn129 carries an N-linked (GlcNAc...) asparagine glycan. Positions 164–166 (RGD) match the RGD motif. Thr199 carries the post-translational modification Phosphothreonine. Residues 214-234 (LSYLLLFILDLVICLVTCLGL) form a helical membrane-spanning segment. At 235–240 (ARRSKC) the chain is on the cytoplasmic side. A helical transmembrane segment spans residues 241-261 (LLASMLCCGILTLILSWASLA). At 262-385 (ADAAAAVGTS…DALTGICYDG (124 aa)) the chain is on the extracellular side. Intrachain disulfides connect Cys274–Cys382 and Cys300–Cys367. 2 N-linked (GlcNAc...) asparagine glycosylation sites follow: Asn283 and Asn352. A helical membrane pass occupies residues 386-406 (IEGLLFLGLFSLLAALAFSTL). Residues 407 to 532 (TCAGPRAWKY…EHLRHYEFPS (126 aa)) lie on the Cytoplasmic side of the membrane. Ser504 bears the Phosphoserine mark. The PY-motif; mediates interaction with NEDD4L signature appears at 506 to 509 (PPTY).

The protein belongs to the tweety family. In terms of assembly, forms cis-homodimers in the presence of Ca(+2) and forms monomers and trans-dimers in the absence of Ca(2+). Interacts with NEDD4L. In terms of processing, ubiquitinated by NEDD4L, leading to its proteasomal degradation.

Its subcellular location is the cell membrane. The enzyme catalyses chloride(in) = chloride(out). It catalyses the reaction L-glutamate(out) = L-glutamate(in). Its activity is regulated as follows. Inhibited by (4-[(2-butyl-6,7-dichloro-2- cyclopentyl-2,3-dihydro-1-oxo-1H-inden-5-yl)oxy]butanoic acid). Functionally, calcium-independent, swelling-dependent volume-regulated anion channel (VRAC-swell) which plays a pivotal role in the process of regulatory volume decrease (RVD) in the brain through the efflux of anions like chloride and organic osmolytes like glutamate. Probable large-conductance Ca(2+)-activated chloride channel. This is Protein tweety homolog 2 (Ttyh2) from Mus musculus (Mouse).